The sequence spans 75 residues: MLCLPVFIILLLLASPAAPNPLEKRIQSDLIRAALEDADMKTDEREIVNIIDSISDVAKQICCEITVQCCVLDEE.

Residues 1–19 form the signal peptide; it reads MLCLPVFIILLLLASPAAP. Positions 20–59 are excised as a propeptide; the sequence is NPLEKRIQSDLIRAALEDADMKTDEREIVNIIDSISDVAK. The residue at position 60 (Q60) is a Pyrrolidone carboxylic acid.

Belongs to the conotoxin T superfamily. In terms of processing, contains 2 disulfide bonds that can be either 'C1-C3, C2-C4' or 'C1-C4, C2-C3', since these disulfide connectivities have been observed for conotoxins with cysteine framework V (for examples, see AC P0DQQ7 and AC P81755). As to expression, expressed by the venom duct.

It is found in the secreted. In Conus ventricosus (Mediterranean cone), this protein is Conotoxin Vn5.5.